A 739-amino-acid chain; its full sequence is POU domain, class 2, transcription factor 1 (739 aa).

Positions 1–11 (MNNPSETSKPS) are enriched in polar residues. Disordered stretches follow at residues 1 to 39 (MNNP…GGPI), 67 to 95 (SLNV…SVQA), 253 to 277 (TPIQ…EEPS), 353 to 378 (DSTL…RRKK), and 489 to 553 (SVTG…SSPL). Positions 81–95 (SQQPSQPSQQPSVQA) are enriched in low complexity. The region spanning 274–348 (EEPSDLEELE…LLEKWLNDAE (75 aa)) is the POU-specific domain. Positions 353–364 (DSTLSSPSALNS) are enriched in low complexity. Residues 375 to 434 (RRKKRTSIETNIRVALEKSFLENQKPTSEEITMIADQLNMEKEVIRVWFCNRRQKEKRIN) constitute a DNA-binding region (homeobox). A compositionally biased stretch (low complexity) spans 489 to 552 (SVTGTTETTS…QTTSTPLSSP (64 aa)).

Belongs to the POU transcription factor family. Class-2 subfamily. As to quaternary structure, interacts with NR3C1, AR and PGR.

It is found in the nucleus. In terms of biological role, transcription factor that binds to the octamer motif (5'-ATTTGCAT-3') and activates the promoters of the genes for some small nuclear RNAs (snRNA) and of genes such as those for histone H2B and immunoglobulins. Modulates transcription transactivation by NR3C1, AR and PGR. This Gallus gallus (Chicken) protein is POU domain, class 2, transcription factor 1 (POU2F1).